The following is a 263-amino-acid chain: Palmitoyltransferase ZDHHC22 (263 aa).

Topologically, residues 1–9 are cytoplasmic; the sequence is MLALRLLNV. The chain crosses the membrane as a helical span at residues 10-30; it reads VAPAYFLCISLVTFVLQLFLF. The Lumenal segment spans residues 31–47; it reads LPSMREDPTATPLFSPA. The helical transmembrane segment at 48–68 threads the bilayer; the sequence is VLHGALFLFLSANALGNYILV. Residues 69–125 are Cytoplasmic-facing; the sequence is VQNSPDDLGACQGTSSQRPQRPPPSTHFCRVCARVTLRHDHHCFFTGNCIGSRNMRN. One can recognise a DHHC domain in the interval 91-131; sequence PPSTHFCRVCARVTLRHDHHCFFTGNCIGSRNMRNFILFCL. The S-palmitoyl cysteine intermediate role is filled by C111. Transmembrane regions (helical) follow at residues 126-146 and 147-167; these read FILF…AGVA and YISA…TLLP. The Cytoplasmic portion of the chain corresponds to 168 to 182; the sequence is TSISQFFSGAVLGSD. The chain crosses the membrane as a helical span at residues 183–203; sequence MFVILMLYLWFAVGLACAGFC. Topologically, residues 204–263 are lumenal; the sequence is CHQLLLILRGQTRYQVRKGVAVRARPWRKNLQEVFGKRWLLGLLVPMFNVGTESSKQQDK.

The protein belongs to the DHHC palmitoyltransferase family. In terms of assembly, interacts with CNN3.

The protein localises to the endoplasmic reticulum membrane. It is found in the golgi apparatus membrane. The catalysed reaction is L-cysteinyl-[protein] + hexadecanoyl-CoA = S-hexadecanoyl-L-cysteinyl-[protein] + CoA. Its function is as follows. Palmitoyltransferase that could catalyze the addition of palmitate onto various protein substrates and be involved in a variety of cellular processes. Catalyzes the palmitoylation of KCNMA1, regulating localization of KCNMA1 to the plasma membrane. Might also mediate palmitoylation of CNN3. This chain is Palmitoyltransferase ZDHHC22, found in Rattus norvegicus (Rat).